The sequence spans 864 residues: uncharacterized protein (864 aa).

This is an uncharacterized protein from Rickettsia typhi (strain ATCC VR-144 / Wilmington).